The primary structure comprises 247 residues: C-type lectin domain family 7 member A (247 aa).

At 1–44 the chain is on the cytoplasmic side; sequence MEYQSSVENLDEDGYTQLDFSSRNITRRSVVSEKGLCAASSHWR. The ITAM-like signature appears at 15–18; sequence YTQL. The chain crosses the membrane as a helical; Signal-anchor for type II membrane protein span at residues 45–65; that stretch reads LIAVTLGILCSVMLVITVVLS. Residues 66 to 247 lie on the Extracellular side of the membrane; it reads TSGIWRSSSG…YSICEKKLSV (182 aa). A compositionally biased stretch (polar residues) spans 81 to 101; sequence SDSFPSRNKDNQSQPTQSSLE. Positions 81 to 103 are disordered; it reads SDSFPSRNKDNQSQPTQSSLEDS. N-linked (GlcNAc...) asparagine glycosylation is present at Asn91. Intrachain disulfides connect Cys120-Cys131, Cys148-Cys241, and Cys220-Cys233. Residues 127–242 form the C-type lectin domain; it reads HEDSCYLFST…CSVHSYSICE (116 aa). Residue 146–153 coordinates (1,3-beta-D-glucosyl)n; it reads RQCFQLGS. Lys157, Asp159, and Glu163 together coordinate a divalent metal cation. Residue Glu195 participates in (1,3-beta-D-glucosyl)n binding. Glu242 lines the a divalent metal cation pocket.

As to quaternary structure, homodimer. Interacts with SYK; participates in leukocyte activation in presence of fungal pathogens. Interacts with CD37; this interaction controls CLEC7A-mediated IL-6 production. Post-translationally, phosphorylated on tyrosine residues in response to beta-glucan binding. As to expression, detected in bone marrow, monocytes, macrophages, dendritic cells and natural killer cells.

It localises to the cell membrane. Functionally, lectin that functions as a pattern recognizing receptor (PRR) specific for beta-1,3-linked and beta-1,6-linked glucans, which constitute cell wall constituents from pathogenic bacteria and fungi. Necessary for the TLR2-mediated inflammatory response and activation of NF-kappa-B: upon beta-glucan binding, recruits SYK via its ITAM motif and promotes a signaling cascade that activates some CARD domain-BCL10-MALT1 (CBM) signalosomes, leading to the activation of NF-kappa-B and MAP kinase p38 (MAPK11, MAPK12, MAPK13 and/or MAPK14) pathways which stimulate expression of genes encoding pro-inflammatory cytokines and chemokines. Enhances cytokine production in macrophages and dendritic cells. Mediates production of reactive oxygen species in the cell. Mediates phagocytosis of C.albicans conidia. Binds T-cells in a way that does not involve their surface glycans and plays a role in T-cell activation. Stimulates T-cell proliferation. Induces phosphorylation of SCIMP after binding beta-glucans. This chain is C-type lectin domain family 7 member A (CLEC7A), found in Bos taurus (Bovine).